The sequence spans 887 residues: Beta-galactosidase 14 (887 aa).

An N-terminal signal peptide occupies residues 1-31 (MSKSSRIRMKSRTRYLIAILLVISLCSKASS). The Proton donor role is filled by Glu-197. The active-site Nucleophile is Glu-268. N-linked (GlcNAc...) asparagine glycans are attached at residues Asn-269, Asn-300, Asn-395, and Asn-785. The region spanning 752-838 (KDMRLKAVMR…KTLAVQVKCE (87 aa)) is the SUEL-type lectin domain. The segment covering 838–852 (EKKEGKQDEKKKKED) has biased composition (basic and acidic residues). The interval 838 to 887 (EKKEGKQDEKKKKEDKDEEEEDDEDDDEEEEEEDKENKDTKDMENKNQDM) is disordered. Over residues 853-871 (KDEEEEDDEDDDEEEEEED) the composition is skewed to acidic residues. The span at 872-887 (KENKDTKDMENKNQDM) shows a compositional bias: basic and acidic residues.

The protein belongs to the glycosyl hydrolase 35 family.

Its subcellular location is the secreted. The protein resides in the extracellular space. The protein localises to the apoplast. The enzyme catalyses Hydrolysis of terminal non-reducing beta-D-galactose residues in beta-D-galactosides.. This is Beta-galactosidase 14 (BGAL14) from Arabidopsis thaliana (Mouse-ear cress).